The primary structure comprises 64 residues: DNA-binding protein 7b (64 aa).

Belongs to the 7 kDa DNA-binding/endoribonuclease P2 family. In terms of assembly, monomer.

The protein localises to the cytoplasm. Can constrain negative DNA supercoils. May be involved in maintaining the integrity of the genome at high temperature. The sequence is that of DNA-binding protein 7b from Saccharolobus islandicus (strain HVE10/4) (Sulfolobus islandicus).